We begin with the raw amino-acid sequence, 421 residues long: Imidazolonepropionase (421 aa).

Residues H81 and H83 each coordinate Fe(3+). Positions 81 and 83 each coordinate Zn(2+). 4-imidazolone-5-propanoate is bound by residues R90, Y153, and H186. Y153 provides a ligand contact to N-formimidoyl-L-glutamate. Fe(3+) is bound at residue H251. Position 251 (H251) interacts with Zn(2+). A 4-imidazolone-5-propanoate-binding site is contributed by E254. Position 326 (D326) interacts with Fe(3+). Residue D326 participates in Zn(2+) binding. The N-formimidoyl-L-glutamate site is built by N328 and G330. 4-imidazolone-5-propanoate is bound at residue S331.

Belongs to the metallo-dependent hydrolases superfamily. HutI family. It depends on Zn(2+) as a cofactor. The cofactor is Fe(3+).

It is found in the cytoplasm. It catalyses the reaction 4-imidazolone-5-propanoate + H2O = N-formimidoyl-L-glutamate. It functions in the pathway amino-acid degradation; L-histidine degradation into L-glutamate; N-formimidoyl-L-glutamate from L-histidine: step 3/3. Functionally, catalyzes the hydrolytic cleavage of the carbon-nitrogen bond in imidazolone-5-propanoate to yield N-formimidoyl-L-glutamate. It is the third step in the universal histidine degradation pathway. This Streptococcus pyogenes serotype M28 (strain MGAS6180) protein is Imidazolonepropionase.